Reading from the N-terminus, the 108-residue chain is MSEHIVNVTDASFEQDVLKADGPVLVDYWAEWCGPCKMIAPVLDEVARDYQGKLKVCKLNIDENQDTPPKYGVRGIPTLMLFKDGNVEATKVGALSKSQLAAFLDANI.

One can recognise a Thioredoxin domain in the interval 2–108 (SEHIVNVTDA…QLAAFLDANI (107 aa)). A disulfide bridge links cysteine 33 with cysteine 36.

This sequence belongs to the thioredoxin family.

Functionally, participates in various redox reactions through the reversible oxidation of its active center dithiol to a disulfide and catalyzes dithiol-disulfide exchange reactions. This chain is Thioredoxin (trxA), found in Pseudomonas aeruginosa (strain ATCC 15692 / DSM 22644 / CIP 104116 / JCM 14847 / LMG 12228 / 1C / PRS 101 / PAO1).